Reading from the N-terminus, the 113-residue chain is Small ribosomal subunit protein uS15 (113 aa).

This sequence belongs to the universal ribosomal protein uS15 family. As to quaternary structure, part of the 30S ribosomal subunit. Forms a bridge to the 50S subunit in the 70S ribosome, contacting the 23S rRNA.

Its function is as follows. One of the primary rRNA binding proteins, it binds directly to 16S rRNA where it helps nucleate assembly of the platform of the 30S subunit by binding and bridging several RNA helices of the 16S rRNA. Forms an intersubunit bridge (bridge B4) with the 23S rRNA of the 50S subunit in the ribosome. The sequence is that of Small ribosomal subunit protein uS15 from Haemophilus influenzae (strain PittEE).